The chain runs to 359 residues: 3-dehydroquinate synthase (359 aa).

NAD(+) contacts are provided by residues 71 to 76, 105 to 109, 129 to 130, K142, and K151; these read DGEAYK, GVIGD, and TT. Zn(2+)-binding residues include E184, H247, and H264.

This sequence belongs to the sugar phosphate cyclases superfamily. Dehydroquinate synthase family. Co(2+) is required as a cofactor. Requires Zn(2+) as cofactor. The cofactor is NAD(+).

Its subcellular location is the cytoplasm. It catalyses the reaction 7-phospho-2-dehydro-3-deoxy-D-arabino-heptonate = 3-dehydroquinate + phosphate. Its pathway is metabolic intermediate biosynthesis; chorismate biosynthesis; chorismate from D-erythrose 4-phosphate and phosphoenolpyruvate: step 2/7. In terms of biological role, catalyzes the conversion of 3-deoxy-D-arabino-heptulosonate 7-phosphate (DAHP) to dehydroquinate (DHQ). This chain is 3-dehydroquinate synthase, found in Burkholderia mallei (strain NCTC 10247).